A 479-amino-acid polypeptide reads, in one-letter code: MDTAQVFALFYMATVMAAGTKNKASQAVSDPCSEIHFDEQLANYFENEVSAATTQLDENQNFERSWKLLQYLQMDHQKSKGAAALAAYASTINIRTAANVKAASGELLTAASLLRQRAANVSAAFQLQGQGVIKLGTPDIDNGAKSITHADAGCNYAAISKTVPTQRCTPPQQQADTITAADMQPDKLDELQLITEAYTTTITIAASAYSKGTPATGHTVYTYGNCQSTGGSASAQLGDTHALGIHVKTIGTKAVTEKTTLQPSSSNKCPDEGTTAELTPIKRLARAICLARKASLAKPKALSRLQYSDLQTDTDFKRIAAIFLSRNGKQLDPEKDSQEINELIKETYGPNEEHFHKSYVEALDNKKWEFKIKESKIEGTVNALANGVDAGLATAYYASKRQSTCGQAAADTPIVSSDVEKCKGKTQDDCRTADECEMRDGECNAKVAKTAEPDSKTNTTGNNSFAIKTSTLLLAVLLF.

Residues 1-12 (MDTAQVFALFYM) form the signal peptide. Residues Asn-120 and Asn-458 are each glycosylated (N-linked (GlcNAc...) asparagine). Asn-462 is lipidated: GPI-anchor amidated asparagine. Positions 463–479 (NSFAIKTSTLLLAVLLF) are cleaved as a propeptide — removed in mature form.

The protein resides in the cell membrane. VSG forms a coat on the surface of the parasite. The trypanosome evades the immune response of the host by expressing a series of antigenically distinct VSGs from an estimated 1000 VSG genes. The chain is Variant surface glycoprotein ILTAT 1.22 from Trypanosoma brucei brucei.